The chain runs to 803 residues: Protein translocase subunit SecA (803 aa).

ATP is bound by residues glutamine 100, 118–122, and aspartate 508; that span reads GEGKT.

It belongs to the SecA family. As to quaternary structure, monomer and homodimer. Part of the essential Sec protein translocation apparatus which comprises SecA, SecYEG and auxiliary proteins SecDF. Other proteins may also be involved.

The protein localises to the cell membrane. Its subcellular location is the cytoplasm. It catalyses the reaction ATP + H2O + cellular proteinSide 1 = ADP + phosphate + cellular proteinSide 2.. Part of the Sec protein translocase complex. Interacts with the SecYEG preprotein conducting channel. Has a central role in coupling the hydrolysis of ATP to the transfer of proteins into and across the cell membrane, serving as an ATP-driven molecular motor driving the stepwise translocation of polypeptide chains across the membrane. This Leuconostoc mesenteroides subsp. mesenteroides (strain ATCC 8293 / DSM 20343 / BCRC 11652 / CCM 1803 / JCM 6124 / NCDO 523 / NBRC 100496 / NCIMB 8023 / NCTC 12954 / NRRL B-1118 / 37Y) protein is Protein translocase subunit SecA.